A 205-amino-acid chain; its full sequence is ATP phosphoribosyltransferase (205 aa).

It belongs to the ATP phosphoribosyltransferase family. Short subfamily. As to quaternary structure, heteromultimer composed of HisG and HisZ subunits.

Its subcellular location is the cytoplasm. It catalyses the reaction 1-(5-phospho-beta-D-ribosyl)-ATP + diphosphate = 5-phospho-alpha-D-ribose 1-diphosphate + ATP. It participates in amino-acid biosynthesis; L-histidine biosynthesis; L-histidine from 5-phospho-alpha-D-ribose 1-diphosphate: step 1/9. Its function is as follows. Catalyzes the condensation of ATP and 5-phosphoribose 1-diphosphate to form N'-(5'-phosphoribosyl)-ATP (PR-ATP). Has a crucial role in the pathway because the rate of histidine biosynthesis seems to be controlled primarily by regulation of HisG enzymatic activity. The sequence is that of ATP phosphoribosyltransferase from Helicobacter hepaticus (strain ATCC 51449 / 3B1).